Reading from the N-terminus, the 344-residue chain is Ferredoxin--NADP reductase (344 aa).

Residues Ser-12, Asp-31, Lys-39, Tyr-43, Val-83, Ile-118, Asp-285, and Ser-326 each contribute to the FAD site.

The protein belongs to the ferredoxin--NADP reductase type 2 family. In terms of assembly, homodimer. FAD is required as a cofactor.

It catalyses the reaction 2 reduced [2Fe-2S]-[ferredoxin] + NADP(+) + H(+) = 2 oxidized [2Fe-2S]-[ferredoxin] + NADPH. The polypeptide is Ferredoxin--NADP reductase (Staphylococcus aureus (strain MW2)).